The chain runs to 687 residues: Homoaconitase, mitochondrial (687 aa).

Residues 1-18 constitute a mitochondrion transit peptide; sequence MFAFRNRAVTQTLLVRRY. The [4Fe-4S] cluster site is built by Cys-340, Cys-400, and Cys-403. Residues 481–490 show a composition bias toward acidic residues; it reads EAEADAEAAE. A disordered region spans residues 481-500; it reads EAEADAEAAESDPAPSGGVL.

Belongs to the aconitase/IPM isomerase family. Requires [4Fe-4S] cluster as cofactor.

Its subcellular location is the mitochondrion. The enzyme catalyses (2R,3S)-homoisocitrate = cis-homoaconitate + H2O. The protein operates within amino-acid biosynthesis; L-lysine biosynthesis via AAA pathway; L-alpha-aminoadipate from 2-oxoglutarate: step 3/5. Catalyzes the reversible hydration of cis-homoaconitate to (2R,3S)-homoisocitrate, a step in the alpha-aminoadipate pathway for lysine biosynthesis. This chain is Homoaconitase, mitochondrial (LYS4), found in Yarrowia lipolytica (strain CLIB 122 / E 150) (Yeast).